The chain runs to 68 residues: Large ribosomal subunit protein uL29 (68 aa).

Belongs to the universal ribosomal protein uL29 family.

The chain is Large ribosomal subunit protein uL29 from Bradyrhizobium diazoefficiens (strain JCM 10833 / BCRC 13528 / IAM 13628 / NBRC 14792 / USDA 110).